A 1215-amino-acid polypeptide reads, in one-letter code: Chromosome segregation protein sudA (1215 aa).

32–39 is an ATP binding site; that stretch reads GRNGSGKS. The stretch at 177–522 forms a coiled coil; it reads KIMHETNSKR…LSQMMDHNTS (346 aa). The tract at residues 313–332 is disordered; the sequence is SDNQAAAQESKARHDESLKA. The SMC hinge domain occupies 538–650; sequence EGVYGTLAEL…PNLQVASQYA (113 aa). A disordered region spans residues 654 to 676; that stretch reads GVNATTPEGDRSDKRGALTGGFH. Residues 684–1091 are a coiled coil; the sequence is DAVKNLAKWR…EEAKHSVENY (408 aa).

This sequence belongs to the SMC family. SMC3 subfamily.

Its subcellular location is the nucleus. In terms of biological role, involved in chromosome segregation in mitosis. This Emericella nidulans (strain FGSC A4 / ATCC 38163 / CBS 112.46 / NRRL 194 / M139) (Aspergillus nidulans) protein is Chromosome segregation protein sudA (sudA).